The sequence spans 220 residues: Glutathione peroxidase (220 aa).

Selenocysteine 64 is a catalytic residue. Residue selenocysteine 64 is a non-standard amino acid, selenocysteine.

The protein belongs to the glutathione peroxidase family. During periods of oxidative stress, Sec-64 may react with a superoxide radical, irreversibly lose hydroselenide and be converted to dehydroalanine.

It carries out the reaction 2 glutathione + H2O2 = glutathione disulfide + 2 H2O. Its function is as follows. May protect the virus and component of infected cells from oxidative damage by peroxides whose formation may be stimulated by infection. The chain is Glutathione peroxidase (GPX1) from Homo sapiens (Human).